The chain runs to 259 residues: MATIKEIKEFLVTVKELESPIFLELEKDNRSGVQKEISKRKRAIQAELDENLRLESMLSYEKELYKQGLTLIAGIDEVGRGPLAGPVVAAAVILSKNCKIKGLNDSKKIPKKKHLEIFQAVQDQALSIGIGIIDNQVIDQVNIYEATKLAMQEAISQLSPQPEHLLIDAMKLDLPISQTSIIKGDANSLSIAAASIVAKVTRDELLKEYDQQFPGYDFATNAGYGTAKHLEGLTKLGVTPIHRTSFEPVKSLVLGKKES.

The region spanning 70–258 (TLIAGIDEVG…VKSLVLGKKE (189 aa)) is the RNase H type-2 domain. The a divalent metal cation site is built by aspartate 76, glutamate 77, and aspartate 168.

Belongs to the RNase HII family. Requires Mn(2+) as cofactor. It depends on Mg(2+) as a cofactor.

Its subcellular location is the cytoplasm. The enzyme catalyses Endonucleolytic cleavage to 5'-phosphomonoester.. In terms of biological role, endonuclease that specifically degrades the RNA of RNA-DNA hybrids. This chain is Ribonuclease HII, found in Streptococcus pneumoniae serotype 4 (strain ATCC BAA-334 / TIGR4).